Consider the following 470-residue polypeptide: V-type proton ATPase subunit S1 (470 aa).

Residues 1-41 (MMAAMATARVRMGPRCAQALWRMPWLPVFLSLAAAAAAAAA) form the signal peptide. Positions 42 to 231 (EQQVPLVLWS…TAVRPSRVAR (190 aa)) are excised as a propeptide. The Lumenal segment spans residues 42 to 419 (EQQVPLVLWS…EQFSYASDCA (378 aa)). Asn-170, Asn-261, Asn-273, Asn-296, Asn-303, Asn-350, and Asn-357 each carry an N-linked (GlcNAc...) asparagine glycan. A disulfide bridge connects residues Cys-371 and Cys-418. The helical transmembrane segment at 420–440 (SFFSPGIWMGLLTSLFMLFIF) threads the bilayer. Residues 441–470 (TYGLHMILSLKTMDRFDDHKGPTISLTQIV) are Cytoplasmic-facing. Phosphoserine is present on Ser-465.

It belongs to the vacuolar ATPase subunit S1 family. In terms of assembly, accessory component of the multisubunit proton-transporting vacuolar (V)-ATPase protein pump. Interacts (via N-terminus) with ATP6AP2 (via N-terminus). Interacts with RNASEK. Interacts with TMEM106B (via C-terminus). In terms of processing, N-glycosylated. In terms of tissue distribution, widely expressed, with highest levels in brain and lowest in liver and duodenum.

The protein localises to the endoplasmic reticulum membrane. It localises to the endoplasmic reticulum-Golgi intermediate compartment membrane. The protein resides in the cytoplasmic vesicle. Its subcellular location is the secretory vesicle. It is found in the synaptic vesicle membrane. The protein localises to the clathrin-coated vesicle membrane. Functionally, accessory subunit of the proton-transporting vacuolar (V)-ATPase protein pump, which is required for luminal acidification of secretory vesicles. Guides the V-type ATPase into specialized subcellular compartments, such as neuroendocrine regulated secretory vesicles or the ruffled border of the osteoclast, thereby regulating its activity. Involved in membrane trafficking and Ca(2+)-dependent membrane fusion. May play a role in the assembly of the V-type ATPase complex. In aerobic conditions, involved in intracellular iron homeostasis, thus triggering the activity of Fe(2+) prolyl hydroxylase (PHD) enzymes, and leading to HIF1A hydroxylation and subsequent proteasomal degradation. In islets of Langerhans cells, may regulate the acidification of dense-core secretory granules. The protein is V-type proton ATPase subunit S1 (ATP6AP1) of Homo sapiens (Human).